The chain runs to 189 residues: Interferon alpha-7 (189 aa).

A signal peptide spans 1–23 (MARSFSLLMVVLVLSYKSICSLG). 2 disulfides stabilise this stretch: C24–C122 and C52–C162.

The protein belongs to the alpha/beta interferon family.

Its subcellular location is the secreted. Functionally, produced by macrophages, IFN-alpha have antiviral activities. Interferon stimulates the production of two enzymes: a protein kinase and an oligoadenylate synthetase. This chain is Interferon alpha-7 (IFNA7), found in Homo sapiens (Human).